The sequence spans 412 residues: Protein BTN1 (412 aa).

A signal peptide spans 1 to 29 (MDRRKLIFGKFWLFGLLNNVLYVVILAAA). 9 helical membrane passes run 41 to 61 (LILL…PFFI), 70 to 90 (IWSL…GRLG), 91 to 111 (VCIV…ITFL), 131 to 151 (GAGL…KIPV), 154 to 174 (SLLL…LQVE), 234 to 254 (VLVV…YLIN), 281 to 300 (IYVA…RSSG), 307 to 329 (GLYL…SWYY), and 334 to 356 (VWVI…VNSF).

Belongs to the battenin family.

It is found in the vacuole membrane. Its function is as follows. Involved in vacuolar transport and vacuole pH homeostasis. Also required for cytokinesis. In Eremothecium gossypii (strain ATCC 10895 / CBS 109.51 / FGSC 9923 / NRRL Y-1056) (Yeast), this protein is Protein BTN1 (BTN1).